Here is an 842-residue protein sequence, read N- to C-terminus: Translation initiation factor IF-2 (842 aa).

Disordered regions lie at residues 42–91 (ETKR…NLSS) and 139–253 (LQKQ…NQEP). 2 stretches are compositionally biased toward basic and acidic residues: residues 176–190 (IEKR…EERH) and 199–214 (SEIR…DERR). One can recognise a tr-type G domain in the interval 340-509 (PRPPVVTIMG…LLQAEMLDLK (170 aa)). Positions 349-356 (GHVDHGKT) are G1. 349–356 (GHVDHGKT) serves as a coordination point for GTP. Residues 374–378 (GITQH) are G2. The tract at residues 395-398 (DTPG) is G3. GTP is bound by residues 395–399 (DTPGH) and 449–452 (NKID). The tract at residues 449-452 (NKID) is G4. The interval 485-487 (SAK) is G5.

Belongs to the TRAFAC class translation factor GTPase superfamily. Classic translation factor GTPase family. IF-2 subfamily.

It is found in the cytoplasm. Functionally, one of the essential components for the initiation of protein synthesis. Protects formylmethionyl-tRNA from spontaneous hydrolysis and promotes its binding to the 30S ribosomal subunits. Also involved in the hydrolysis of GTP during the formation of the 70S ribosomal complex. The protein is Translation initiation factor IF-2 of Bartonella tribocorum (strain CIP 105476 / IBS 506).